Consider the following 309-residue polypeptide: Homoserine O-acetyltransferase (309 aa).

The active-site Acyl-thioester intermediate is the Cys142. The substrate site is built by Lys163 and Ser192. The active-site Proton acceptor is His235. Glu237 is an active-site residue. Arg249 is a substrate binding site.

Belongs to the MetA family.

The protein localises to the cytoplasm. The enzyme catalyses L-homoserine + acetyl-CoA = O-acetyl-L-homoserine + CoA. It participates in amino-acid biosynthesis; L-methionine biosynthesis via de novo pathway; O-acetyl-L-homoserine from L-homoserine: step 1/1. Its function is as follows. Transfers an acetyl group from acetyl-CoA to L-homoserine, forming acetyl-L-homoserine. This chain is Homoserine O-acetyltransferase, found in Methanomethylophilus alvi (strain Mx1201).